Consider the following 384-residue polypeptide: GDSL esterase/lipase At1g71691 (384 aa).

Positions 1–27 (MAFHFRRLCFFSALLAVVLQLLHGVSG) are cleaved as a signal peptide. Residue Ser-62 is the Nucleophile of the active site. Residues Asp-348 and His-351 contribute to the active site.

This sequence belongs to the 'GDSL' lipolytic enzyme family.

Its subcellular location is the secreted. The polypeptide is GDSL esterase/lipase At1g71691 (Arabidopsis thaliana (Mouse-ear cress)).